Reading from the N-terminus, the 359-residue chain is Hyaluronan and proteoglycan link protein 3 (359 aa).

The first 17 residues, 1–17 (MSLLFLVLLSPFPCVLG), serve as a signal peptide directing secretion. Residues 48–164 (KLVVETTEES…ESGLVELELR (117 aa)) form the Ig-like V-type domain. Cystine bridges form between C70/C146, C188/C259, C212/C233, C286/C355, and C311/C332. Link domains follow at residues 166 to 261 (VVFP…FCFA) and 266 to 357 (GRVY…YCYV).

Belongs to the HAPLN family.

It localises to the secreted. The protein resides in the extracellular space. Its subcellular location is the extracellular matrix. Its function is as follows. May function in hyaluronic acid binding. This Mus musculus (Mouse) protein is Hyaluronan and proteoglycan link protein 3 (Hapln3).